The chain runs to 919 residues: Kinesin-like protein KIN-UA (919 aa).

The disordered stretch occupies residues 1–68 (MSTTSGTGGV…SGGGGDAGVP (68 aa)). Over residues 15 to 51 (GTQRSSLRTQSSASTSSGGQKASVKSKSVLRKSSPAA) the composition is skewed to low complexity. Positions 52–66 (LGGGSSKSGGGGDAG) are enriched in gly residues. One can recognise a Kinesin motor domain in the interval 70 to 412 (RVRVAVRLRP…IMFGQRAMKV (343 aa)). Residue 155–162 (GQTGTGKT) coordinates ATP. The segment at 286–305 (TRDGLSSESNGNSHMTKSLK) is disordered. Residues 291-301 (SSESNGNSHMT) show a composition bias toward polar residues. A D-BOX motif is present at residues 382–390 (RTSLVITIG). Coiled-coil stretches lie at residues 428 to 492 (SRRL…SIKK) and 530 to 621 (ALEE…LEQH). ARM repeat units lie at residues 650-689 (KPPVARLFEQVGLQKILSLLEAEDADVRIHAVKVVANLAA), 691-731 (EANQ…NLAM), 733-773 (ETNQ…NLCG), and 775-814 (DKLQTKLRSEGGIAALLGMVRCGHPDVLAQVARGIANFAK).

This sequence belongs to the TRAFAC class myosin-kinesin ATPase superfamily. Kinesin family. Ungrouped subfamily. In terms of assembly, interacts (via C-terminus) with NEK5. Expressed in leaves, guard cells, trichomes, vascular tissues, stele of the root tip region and columella cells. Highest expression detected in guard cells.

Its subcellular location is the cytoplasm. It localises to the cytoskeleton. In Arabidopsis thaliana (Mouse-ear cress), this protein is Kinesin-like protein KIN-UA.